Reading from the N-terminus, the 264-residue chain is Thiazole synthase (264 aa).

Lys106 acts as the Schiff-base intermediate with DXP in catalysis. 1-deoxy-D-xylulose 5-phosphate-binding positions include Gly167, 193–194, and 215–216; these read AG and NT.

Belongs to the ThiG family. In terms of assembly, homotetramer. Forms heterodimers with either ThiH or ThiS.

The protein localises to the cytoplasm. It catalyses the reaction [ThiS sulfur-carrier protein]-C-terminal-Gly-aminoethanethioate + 2-iminoacetate + 1-deoxy-D-xylulose 5-phosphate = [ThiS sulfur-carrier protein]-C-terminal Gly-Gly + 2-[(2R,5Z)-2-carboxy-4-methylthiazol-5(2H)-ylidene]ethyl phosphate + 2 H2O + H(+). It participates in cofactor biosynthesis; thiamine diphosphate biosynthesis. Its function is as follows. Catalyzes the rearrangement of 1-deoxy-D-xylulose 5-phosphate (DXP) to produce the thiazole phosphate moiety of thiamine. Sulfur is provided by the thiocarboxylate moiety of the carrier protein ThiS. In vitro, sulfur can be provided by H(2)S. The polypeptide is Thiazole synthase (Stenotrophomonas maltophilia (strain R551-3)).